A 265-amino-acid polypeptide reads, in one-letter code: Thymidine kinase 2, mitochondrial (265 aa).

The transit peptide at 1–33 (MLLRPLRGWAALALRCFEPGSPGSPASGPGSRR) directs the protein to the mitochondrion. Residues 21–31 (SPGSPASGPGS) show a composition bias toward low complexity. The tract at residues 21-45 (SPGSPASGPGSRRVQRGAWPSDKER) is disordered. 57-65 (GNIASGKTT) lines the ATP pocket. Residue Glu-133 is the Proton acceptor of the active site.

It belongs to the DCK/DGK family. As to quaternary structure, homodimer.

The protein resides in the mitochondrion. The enzyme catalyses thymidine + ATP = dTMP + ADP + H(+). The catalysed reaction is 2'-deoxycytidine + ATP = dCMP + ADP + H(+). It carries out the reaction 2'-deoxyuridine + ATP = dUMP + ADP + H(+). Its function is as follows. Phosphorylates thymidine, deoxycytidine, and deoxyuridine in the mitochondrial matrix. In non-replicating cells, where cytosolic dNTP synthesis is down-regulated, mtDNA synthesis depends solely on TK2 and DGUOK. The polypeptide is Thymidine kinase 2, mitochondrial (TK2) (Macaca fascicularis (Crab-eating macaque)).